A 177-amino-acid chain; its full sequence is Alkyl hydroperoxide reductase AhpD (177 aa).

The active-site Proton donor is the Cys-130. The cysteines at positions 130 and 133 are disulfide-linked. The Cysteine sulfenic acid (-SOH) intermediate role is filled by Cys-133.

This sequence belongs to the AhpD family. Homotrimer.

The enzyme catalyses N(6)-[(R)-dihydrolipoyl]-L-lysyl-[lipoyl-carrier protein] + a hydroperoxide = N(6)-[(R)-lipoyl]-L-lysyl-[lipoyl-carrier protein] + an alcohol + H2O. Functionally, antioxidant protein with alkyl hydroperoxidase activity. Required for the reduction of the AhpC active site cysteine residues and for the regeneration of the AhpC enzyme activity. The protein is Alkyl hydroperoxide reductase AhpD of Mycobacterium bovis (strain ATCC BAA-935 / AF2122/97).